We begin with the raw amino-acid sequence, 162 residues long: Large ribosomal subunit protein uL10 (162 aa).

Belongs to the universal ribosomal protein uL10 family. As to quaternary structure, part of the ribosomal stalk of the 50S ribosomal subunit. The N-terminus interacts with L11 and the large rRNA to form the base of the stalk. The C-terminus forms an elongated spine to which L12 dimers bind in a sequential fashion forming a multimeric L10(L12)X complex.

Its function is as follows. Forms part of the ribosomal stalk, playing a central role in the interaction of the ribosome with GTP-bound translation factors. The chain is Large ribosomal subunit protein uL10 from Vibrio vulnificus (strain CMCP6).